Consider the following 227-residue polypeptide: PKHD-type hydroxylase GDI1238/Gdia_1949 (227 aa).

Positions 78-178 (RVVPPLFNRY…RLASFFWTQS (101 aa)) constitute a Fe2OG dioxygenase domain. Fe cation-binding residues include His-96, Asp-98, and His-159. Arg-169 contacts 2-oxoglutarate.

Fe(2+) serves as cofactor. Requires L-ascorbate as cofactor.

This Gluconacetobacter diazotrophicus (strain ATCC 49037 / DSM 5601 / CCUG 37298 / CIP 103539 / LMG 7603 / PAl5) protein is PKHD-type hydroxylase GDI1238/Gdia_1949.